We begin with the raw amino-acid sequence, 288 residues long: Beta-lactamase CARB-4 (288 aa).

An N-terminal signal peptide occupies residues 1 to 17; it reads MKLLLVFSLLIPSMVFA. Residue serine 65 is the Acyl-ester intermediate of the active site. Residues cysteine 72 and cysteine 118 are joined by a disulfide bond. Residue 229 to 231 participates in substrate binding; that stretch reads RSG.

Belongs to the class-A beta-lactamase family.

The enzyme catalyses a beta-lactam + H2O = a substituted beta-amino acid. Its activity is regulated as follows. Inhibited by clavulanic acid and sulbactam. Functionally, hydrolyzes carbenicillin. Methicillin and oxacillin are weakly hydrolyzed. The sequence is that of Beta-lactamase CARB-4 (carB4) from Pseudomonas aeruginosa.